Here is a 276-residue protein sequence, read N- to C-terminus: Probable ABC transporter permease protein PH1036 (276 aa).

6 helical membrane-spanning segments follow: residues isoleucine 12–valine 32, isoleucine 75–phenylalanine 95, phenylalanine 109–leucine 129, threonine 137–methionine 157, isoleucine 186–valine 206, and glycine 241–phenylalanine 261. The ABC transmembrane type-1 domain occupies leucine 70–phenylalanine 261.

The protein belongs to the binding-protein-dependent transport system permease family. MalFG subfamily.

It is found in the cell membrane. Its function is as follows. Probably part of a binding-protein-dependent transport system PH1036/38/39. Probably responsible for the translocation of the substrate across the membrane. This is Probable ABC transporter permease protein PH1036 from Pyrococcus horikoshii (strain ATCC 700860 / DSM 12428 / JCM 9974 / NBRC 100139 / OT-3).